A 428-amino-acid polypeptide reads, in one-letter code: CRISPR system endoribonuclease Csm6 (428 aa).

A CARF domain region spans residues 1 to 145 (MKILISAVGT…RANREYTALT (145 aa)). The interval 146-428 (ESEIDALIME…QNKELIKMLE (283 aa)) is HEPN domain.

Belongs to the CRISPR-associated Csm6 family. In terms of assembly, homodimer. The composite ssRNase active site is formed at the dimer interface.

With respect to regulation, non-specific ssRNase activity is allosterically activated about 1000-fold by cyclic hexaadenylate (cA6), a second messenger produced by Cas10 of the ternary Csm effector complex in the presence of a cognate target RNA. ssRNase activity is inhibited by physiological concentrations of ATP (1 mM), activity is restored by cOA. In terms of biological role, CRISPR (clustered regularly interspaced short palindromic repeat) is an adaptive immune system that provides protection against mobile genetic elements (viruses, transposable elements and conjugative plasmids). CRISPR clusters contain spacers, sequences complementary to antecedent mobile elements, and target invading nucleic acids. CRISPR clusters are transcribed and processed into CRISPR RNA (crRNA). The type III-A Csm complex binds crRNA and acts as a crRNA-guided RNase, DNase and cyclic oligoadenylate synthase; binding of target RNA cognate to the crRNA is required for all activities. In a heterologous host this Csm effector complex restricts ssRNA phage MS2, suggesting it may target RNA viruses in vivo. This protein is not part of the Csm complex. Csm functions as a non-specific ssDNase. Base-pairing between crRNA and target RNA to form a ternary Csm complex activates a ssDNase activity; target RNA cleavage suppresses the ssDNase, a temporal control that prevents uncontrolled DNA degradation. Viral RNA transcripts probably tether the Csm complex to the viral genome, recruiting Cas10 ssDNA activity which is able to degrade DNA in the transcription bubble, spatially controlling the DNase activity. Functionally, a single-strand-specific endoribonuclease (ssRNase) that is approximately 1000-fold stimulated by cyclic oligoadenylate (cOA); although several species of cOA are synthesized by this organism only cyclic hexaadenylate (cA6) stimulates the ssRNase activity. Cleaves preferentially within GA or AA dinucleotides, although the presence of cA6 broadens the preference. Linear oligoadenylates do not activate the RNase. The protein is CRISPR system endoribonuclease Csm6 of Streptococcus thermophilus.